Reading from the N-terminus, the 29-residue chain is Chassatide C1 (29 aa).

A cross-link (cyclopeptide (Gly-Asn)) is located at residues Gly1–Asn29. 3 disulfides stabilise this stretch: Cys4-Cys18, Cys8-Cys20, and Cys13-Cys26.

In terms of processing, this is a cyclic peptide. Expressed in leaf, fruit, pedical and stem but not in root (at protein level).

Functionally, probably participates in a plant defense mechanism. This is Chassatide C1 from Chassalia chartacea (Chassalia curviflora).